The following is a 474-amino-acid chain: Proline--tRNA ligase (474 aa).

It belongs to the class-II aminoacyl-tRNA synthetase family. ProS type 3 subfamily. Homodimer.

It is found in the cytoplasm. It carries out the reaction tRNA(Pro) + L-proline + ATP = L-prolyl-tRNA(Pro) + AMP + diphosphate. Its function is as follows. Catalyzes the attachment of proline to tRNA(Pro) in a two-step reaction: proline is first activated by ATP to form Pro-AMP and then transferred to the acceptor end of tRNA(Pro). This is Proline--tRNA ligase from Aster yellows witches'-broom phytoplasma (strain AYWB).